Here is a 149-residue protein sequence, read N- to C-terminus: Large ribosomal subunit protein uL11 (149 aa).

This sequence belongs to the universal ribosomal protein uL11 family. As to quaternary structure, part of the ribosomal stalk of the 50S ribosomal subunit. Interacts with L10 and the large rRNA to form the base of the stalk. L10 forms an elongated spine to which L12 dimers bind in a sequential fashion forming a multimeric L10(L12)X complex. In terms of processing, one or more lysine residues are methylated.

In terms of biological role, forms part of the ribosomal stalk which helps the ribosome interact with GTP-bound translation factors. The polypeptide is Large ribosomal subunit protein uL11 (Xanthobacter autotrophicus (strain ATCC BAA-1158 / Py2)).